Consider the following 121-residue polypeptide: Amelogenin (121 aa).

Disordered stretches follow at residues Leu-1–Gln-20 and Gln-32–Thr-121. Residues Ser-48–Asn-58 show a composition bias toward polar residues. Residues Leu-59–Val-71 are compositionally biased toward low complexity. Over residues Pro-85–Pro-111 the composition is skewed to pro residues.

This sequence belongs to the amelogenin family.

It is found in the secreted. The protein localises to the extracellular space. The protein resides in the extracellular matrix. In terms of biological role, plays a role in the biomineralization of teeth. Seems to regulate the formation of crystallites during the secretory stage of tooth enamel development. Thought to play a major role in the structural organization and mineralization of developing enamel. This Ornithorhynchus anatinus (Duckbill platypus) protein is Amelogenin (AMEL).